A 270-amino-acid chain; its full sequence is Putative carbamate hydrolase RutD (270 aa).

This sequence belongs to the AB hydrolase superfamily. Hydrolase RutD family.

It carries out the reaction carbamate + 2 H(+) = NH4(+) + CO2. In terms of biological role, involved in pyrimidine catabolism. May facilitate the hydrolysis of carbamate, a reaction that can also occur spontaneously. In Escherichia coli (strain SMS-3-5 / SECEC), this protein is Putative carbamate hydrolase RutD.